Reading from the N-terminus, the 226-residue chain is CRISPR-associated protein Cas5 (226 aa).

Belongs to the CRISPR-associated protein Cas5 family. Subtype I-A/Apern subfamily. Can form a Cascade complex with Csa5, Cas7, Cas3, Cas3' and Cas8a2.

Its function is as follows. CRISPR (clustered regularly interspaced short palindromic repeat) is an adaptive immune system that provides protection against mobile genetic elements (viruses, transposable elements and conjugative plasmids). CRISPR clusters contain spacers, sequences complementary to antecedent mobile elements, and target invading nucleic acids. CRISPR clusters are transcribed and processed into CRISPR RNA (crRNA). This is CRISPR-associated protein Cas5 (cas5a) from Thermoproteus tenax (strain ATCC 35583 / DSM 2078 / JCM 9277 / NBRC 100435 / Kra 1).